A 243-amino-acid chain; its full sequence is Uridylate kinase (243 aa).

Position 18-21 (18-21 (KLGG)) interacts with ATP. G59 contacts UMP. Residues G60 and R64 each coordinate ATP. UMP-binding positions include D79 and 140–147 (MGMPYFST). Residues Y173 and D176 each contribute to the ATP site.

It belongs to the UMP kinase family. Homohexamer.

It is found in the cytoplasm. It catalyses the reaction UMP + ATP = UDP + ADP. It participates in pyrimidine metabolism; CTP biosynthesis via de novo pathway; UDP from UMP (UMPK route): step 1/1. Its activity is regulated as follows. Inhibited by UTP. Functionally, catalyzes the reversible phosphorylation of UMP to UDP. The sequence is that of Uridylate kinase from Corynebacterium glutamicum (strain R).